Here is a 422-residue protein sequence, read N- to C-terminus: QKLIRIRNPWGEVEWTGRWNDNCPNWNTVDPEVRERLAERHEDGEFWMSFSDFLRHYSRLEICNLTPDTLTSDTYKKWKLTKMDGNWRRGSTAGGCRNYPNTFWMNPQYVIKLEEEDEDQEDGESGCTFLVGLIQKHRRRQRKMGEDMHTIGFGIYEVPEELRGQTNIHLGKNFFLTTRARERSDTFINLREVLNRFKLPPGEYILVPSTFEPNKNGDFCVRVFSEKKADYQAVDDEIEADLEEADVSEDDIDDGFRRLFAQLAGEDAEISAFELQNILRRVLAKRQDIKTDGLSIETCKIMVDMLDSDGTGKLGLKEFYVLWTKIQKYQKIYREIDVDRSGTMNSYEMRKALEEAGFKLPCQLHEVIVARFADDQLIIDFDNFVRCLVRLETLFKIFKQLDPDNTGMIQLDLISWLCFSVL.

One can recognise a Calpain catalytic domain in the interval 1–66; it reads QKLIRIRNPW…YSRLEICNLT (66 aa). The active site involves asparagine 8. Residues glutamate 14, aspartate 21, and glutamate 45 each contribute to the Ca(2+) site. The domain III stretch occupies residues 67–236; that stretch reads PDTLTSDTYK…KKADYQAVDD (170 aa). Residues 237-251 are linker; sequence EIEADLEEADVSEDD. The segment at 252–422 is domain IV; that stretch reads IDDGFRRLFA…LISWLCFSVL (171 aa). The Ca(2+) site is built by alanine 264, aspartate 267, glutamate 269, glutamate 274, aspartate 307, aspartate 309, threonine 311, lysine 313, glutamate 318, aspartate 337, aspartate 339, serine 341, threonine 343, glutamate 348, aspartate 380, and asparagine 383. 2 EF-hand domains span residues 294-327 and 324-359; these read LSIE…TKIQ and TKIQ…AGFK. The EF-hand 3 domain maps to 389–422; it reads VRLETLFKIFKQLDPDNTGMIQLDLISWLCFSVL.

Belongs to the peptidase C2 family. In terms of assembly, forms a heterodimer with a small (regulatory) subunit (CAPNS1). Interacts with CPEB3; this leads to cleavage of CPEB3. It depends on Ca(2+) as a cofactor. In terms of tissue distribution, ubiquitous.

It localises to the cytoplasm. Its subcellular location is the cell membrane. It catalyses the reaction Broad endopeptidase specificity.. With respect to regulation, activated by 200-1000 micromolar concentrations of calcium and inhibited by calpastatin. Its function is as follows. Calcium-regulated non-lysosomal thiol-protease which catalyzes limited proteolysis of substrates involved in cytoskeletal remodeling and signal transduction. Proteolytically cleaves MYOC at 'Arg-226'. Proteolytically cleaves CPEB3 following neuronal stimulation which abolishes CPEB3 translational repressor activity, leading to translation of CPEB3 target mRNAs. The sequence is that of Calpain-2 catalytic subunit (CAPN2) from Oryctolagus cuniculus (Rabbit).